The chain runs to 69 residues: UPF0337 protein RB0906 (69 aa).

It belongs to the UPF0337 (CsbD) family.

The chain is UPF0337 protein RB0906 from Rhizobium meliloti (strain 1021) (Ensifer meliloti).